Here is a 737-residue protein sequence, read N- to C-terminus: Amino-acid acetyltransferase, mitochondrial (737 aa).

The N-terminal 47 residues, 1–47 (MSRSTVLGWCTQSCRLLQKHDHSFSFPTFNGSPPLKKRRFCDSAAPA), are a transit peptide targeting the mitochondrion. A disordered region spans residues 43–78 (SAAPAAPRPSIHRPSEYIPHSKSGGEAPQDLGHKAR). The 170-residue stretch at 558 to 727 (GEPALTLDDP…YEGVCRAIEP (170 aa)) folds into the N-acetyltransferase domain.

The protein belongs to the acetyltransferase family.

The protein resides in the mitochondrion. The catalysed reaction is L-glutamate + acetyl-CoA = N-acetyl-L-glutamate + CoA + H(+). It functions in the pathway amino-acid biosynthesis; L-arginine biosynthesis; N(2)-acetyl-L-ornithine from L-glutamate: step 1/4. In terms of biological role, N-acetylglutamate synthase involved in arginine biosynthesis. In Coccidioides immitis (strain RS) (Valley fever fungus), this protein is Amino-acid acetyltransferase, mitochondrial (ARG2).